The chain runs to 616 residues: Leucine aminopeptidase (616 aa).

Substrate-binding positions include 128–130 and 282–286; these read QCQ and GGMEN. Zn(2+) is bound at residue His-309. Glu-310 (proton acceptor) is an active-site residue. His-313 and Glu-332 together coordinate Zn(2+). Catalysis depends on Tyr-397, which acts as the Proton donor. Position 566–568 (566–568) interacts with substrate; that stretch reads RMK.

It belongs to the peptidase M1 family. Requires Zn(2+) as cofactor.

Its subcellular location is the cytoplasm. The catalysed reaction is an epoxide + H2O = an ethanediol. Aminopeptidase that preferentially cleaves di- and tripeptides. Also has low epoxide hydrolase activity (in vitro). Can hydrolyze the epoxide leukotriene LTA(4) but it forms preferentially 5,6-dihydroxy-7,9,11,14-eicosatetraenoic acid rather than the cytokine leukotriene B(4) as the product compared to the homologous mammalian enzyme (in vitro). The polypeptide is Leucine aminopeptidase (LKHA4) (Arabidopsis thaliana (Mouse-ear cress)).